An 89-amino-acid polypeptide reads, in one-letter code: MSLDTTEKQELINAHQTHATDTGSAEVQVAMLTERISKLSSHLQQNIHDFSSRQGLLKMIGRRKRLLGYVRGKSEKRYSDLIAKLGIRG.

The segment covering 1–10 (MSLDTTEKQE) has biased composition (basic and acidic residues). The segment at 1-23 (MSLDTTEKQELINAHQTHATDTG) is disordered. A compositionally biased stretch (polar residues) spans 14 to 23 (AHQTHATDTG).

It belongs to the universal ribosomal protein uS15 family. Part of the 30S ribosomal subunit. Forms a bridge to the 50S subunit in the 70S ribosome, contacting the 23S rRNA.

Its function is as follows. One of the primary rRNA binding proteins, it binds directly to 16S rRNA where it helps nucleate assembly of the platform of the 30S subunit by binding and bridging several RNA helices of the 16S rRNA. Functionally, forms an intersubunit bridge (bridge B4) with the 23S rRNA of the 50S subunit in the ribosome. This is Small ribosomal subunit protein uS15 from Synechococcus sp. (strain WH7803).